The primary structure comprises 554 residues: Dihydroxy-acid dehydratase (554 aa).

D78 serves as a coordination point for Mg(2+). C119 serves as a coordination point for [2Fe-2S] cluster. The Mg(2+) site is built by D120 and K121. K121 bears the N6-carboxylysine mark. C192 is a [2Fe-2S] cluster binding site. E443 serves as a coordination point for Mg(2+). The Proton acceptor role is filled by S469.

Belongs to the IlvD/Edd family. In terms of assembly, homodimer. [2Fe-2S] cluster is required as a cofactor. Requires Mg(2+) as cofactor.

The catalysed reaction is (2R)-2,3-dihydroxy-3-methylbutanoate = 3-methyl-2-oxobutanoate + H2O. The enzyme catalyses (2R,3R)-2,3-dihydroxy-3-methylpentanoate = (S)-3-methyl-2-oxopentanoate + H2O. The protein operates within amino-acid biosynthesis; L-isoleucine biosynthesis; L-isoleucine from 2-oxobutanoate: step 3/4. Its pathway is amino-acid biosynthesis; L-valine biosynthesis; L-valine from pyruvate: step 3/4. In terms of biological role, functions in the biosynthesis of branched-chain amino acids. Catalyzes the dehydration of (2R,3R)-2,3-dihydroxy-3-methylpentanoate (2,3-dihydroxy-3-methylvalerate) into 2-oxo-3-methylpentanoate (2-oxo-3-methylvalerate) and of (2R)-2,3-dihydroxy-3-methylbutanoate (2,3-dihydroxyisovalerate) into 2-oxo-3-methylbutanoate (2-oxoisovalerate), the penultimate precursor to L-isoleucine and L-valine, respectively. The polypeptide is Dihydroxy-acid dehydratase (Clostridium novyi (strain NT)).